Here is a 22-residue protein sequence, read N- to C-terminus: Caerin-3.2 (22 aa).

K22 carries the lysine amide modification.

In terms of tissue distribution, expressed by the skin parotoid and/or rostral glands.

The protein localises to the secreted. Antibacterial peptide, that adopts an alpha helical conformation which can disrupt bacterial membranes. Each caerin displays a different antimicrobial specificity. The protein is Caerin-3.2 of Ranoidea caerulea (Green tree frog).